Consider the following 548-residue polypeptide: Putative malate oxidoreductase [NAD] (548 aa).

Y96 functions as the Proton donor in the catalytic mechanism. Residue K169 is the Proton acceptor of the active site. E240, D241, and D264 together coordinate a divalent metal cation. NAD(+)-binding positions include 297–300, N410, and N455; that span reads AGTA.

The protein belongs to the malic enzymes family. It depends on Mg(2+) as a cofactor. Mn(2+) is required as a cofactor.

The enzyme catalyses (S)-malate + NAD(+) = pyruvate + CO2 + NADH. It catalyses the reaction oxaloacetate + H(+) = pyruvate + CO2. This is Putative malate oxidoreductase [NAD] (mez) from Mycobacterium tuberculosis (strain CDC 1551 / Oshkosh).